A 390-amino-acid polypeptide reads, in one-letter code: MKFVDEATIKVDAGDGGNGVVSFWREKFVAKGGPDGGDGGDGGDVYLEADENLNTLIDYRFNRFYNAERGKNGSGGNCTGKRGEDITLKVPVGTRAIDIDTGEKVAELMTHGMKQMVAKGGWHGLGNTRFKSSVNRAPRQKTLGTKGEVRELRLELLLLADVGMLGLPNAGKSTFIRAVSAAKPKVADYPFTTLIPSLGVVRARGNKSFVVADIPGLIEGAADGAGLGVRFLKHLERCRVLLHVIDILPIDGSDPVQNALTIIDELEQYSEKVAGKPRWLLFNKTDLLLEEEADEKINEILEALAWEDRYFKIAAVSRTGTQELCDELADFMDTLPKEIQTEEEKAANKVDFMWDDYHKDAMSGKDVVTEDDWDDWDDEEDDGHVIYVRD.

In terms of domain architecture, Obg spans 1-159 (MKFVDEATIK…RELRLELLLL (159 aa)). An OBG-type G domain is found at 160 to 333 (ADVGMLGLPN…LCDELADFMD (174 aa)). GTP is bound by residues 166-173 (GLPNAGKS), 191-195 (FTTLI), 213-216 (DIPG), 283-286 (NKTD), and 314-316 (AAV). The Mg(2+) site is built by Ser-173 and Thr-193.

Belongs to the TRAFAC class OBG-HflX-like GTPase superfamily. OBG GTPase family. In terms of assembly, monomer. Mg(2+) is required as a cofactor.

The protein resides in the cytoplasm. Functionally, an essential GTPase which binds GTP, GDP and possibly (p)ppGpp with moderate affinity, with high nucleotide exchange rates and a fairly low GTP hydrolysis rate. Plays a role in control of the cell cycle, stress response, ribosome biogenesis and in those bacteria that undergo differentiation, in morphogenesis control. In Aliivibrio fischeri (strain MJ11) (Vibrio fischeri), this protein is GTPase Obg.